An 806-amino-acid chain; its full sequence is U4/U6.U5 tri-snRNP-associated protein 1 (806 aa).

The interval 1–121 (MGSSKKHRGE…SGDASSLSIE (121 aa)) is disordered. A compositionally biased stretch (basic residues) spans 32–42 (HREHKKHKHRS). Over residues 58–101 (ERGSERGSGRRGAEAEARSGAHGRERSQAEPSERRVKREKRDDG) the composition is skewed to basic and acidic residues. Residues 104 to 119 (AAASSKASSGDASSLS) are compositionally biased toward low complexity. Residues Lys-125 and Lys-133 each participate in a glycyl lysine isopeptide (Lys-Gly) (interchain with G-Cter in SUMO2) cross-link. A Glycyl lysine isopeptide (Lys-Gly) (interchain with G-Cter in SUMO1); alternate cross-link involves residue Lys-141. A Glycyl lysine isopeptide (Lys-Gly) (interchain with G-Cter in SUMO2); alternate cross-link involves residue Lys-141. Residues Lys-147 and Lys-188 each participate in a glycyl lysine isopeptide (Lys-Gly) (interchain with G-Cter in SUMO2) cross-link. Positions 157 to 231 (NPMALRQREE…KLLEEMDQEF (75 aa)) form a coiled coil. The residue at position 189 (Thr-189) is a Phosphothreonine. Lys-277 is covalently cross-linked (Glycyl lysine isopeptide (Lys-Gly) (interchain with G-Cter in SUMO2)). A Phosphoserine modification is found at Ser-321. Glycyl lysine isopeptide (Lys-Gly) (interchain with G-Cter in SUMO2) cross-links involve residues Lys-329 and Lys-336. Position 348 is a phosphoserine (Ser-348). Glycyl lysine isopeptide (Lys-Gly) (interchain with G-Cter in SUMO2) cross-links involve residues Lys-400 and Lys-414. The disordered stretch occupies residues 418–504 (MRADDLLPLG…GLEEDEAELE (87 aa)). Phosphothreonine is present on Thr-430. A compositionally biased stretch (acidic residues) spans 450–460 (VEEEALEDEEK). Phosphoserine occurs at positions 480, 492, and 527. Positions 494–540 (EGLEEDEAELELQKQLEKGRRLRQLQQLQQLRDSGEKVLEIVKKLES) form a coiled coil. Lys-554 participates in a covalent cross-link: Glycyl lysine isopeptide (Lys-Gly) (interchain with G-Cter in SUMO2). Residues 578–610 (AGNREEQEELMDFERDEERSANGGSESDGEENI) are disordered. A phosphoserine mark is found at Ser-597, Ser-602, Ser-604, and Ser-627. Residues Lys-654, Lys-663, and Lys-690 each participate in a glycyl lysine isopeptide (Lys-Gly) (interchain with G-Cter in SUMO2) cross-link. Thr-701 carries the phosphothreonine modification. Residues Lys-705, Lys-715, Lys-729, Lys-755, and Lys-764 each participate in a glycyl lysine isopeptide (Lys-Gly) (interchain with G-Cter in SUMO2) cross-link. Residue Ser-767 is modified to Phosphoserine. Position 770 is a phosphothreonine (Thr-770). Residues Lys-781 and Lys-786 each participate in a glycyl lysine isopeptide (Lys-Gly) (interchain with G-Cter in SUMO2) cross-link. Ser-795 carries the post-translational modification Phosphoserine. Lys-797 participates in a covalent cross-link: Glycyl lysine isopeptide (Lys-Gly) (interchain with G-Cter in SUMO2).

This sequence belongs to the SNU66/SART1 family. In terms of assembly, identified in the spliceosome C complex. Component of the U4/U6-U5 tri-snRNP complex composed of the U4, U6 and U5 snRNAs and at least PRPF3, PRPF4, PRPF6, PRPF8, PRPF31, SNRNP200, TXNL4A, SNRNP40, DDX23, CD2BP2, PPIH, SNU13, EFTUD2, SART1 and USP39. Interacts with UBL5. Interacts with IVNS1ABP (via Kelch repeats). Post-translationally, sumoylated with SUMO2. As to expression, ubiquitously expressed. Shows a high expression in fetal liver and a low expression in adult liver.

The protein resides in the nucleus. Functionally, plays a role in mRNA splicing as a component of the U4/U6-U5 tri-snRNP, one of the building blocks of the spliceosome. May also bind to DNA. This is U4/U6.U5 tri-snRNP-associated protein 1 (Sart1) from Mus musculus (Mouse).